Consider the following 101-residue polypeptide: MGKHILLLPLGLSLLMSSLLALQCFRCISFDSTGFCYVGRHICQTYPDEICAWVVVTTRDGKFVYGNQSCAECNATTVEHGSLIVSTNCCSATPFCNMVHR.

The N-terminal stretch at 1-21 (MGKHILLLPLGLSLLMSSLLA) is a signal peptide. Positions 22–99 (LQCFRCISFD…CSATPFCNMV (78 aa)) constitute a UPAR/Ly6 domain. 5 disulfides stabilise this stretch: Cys24–Cys51, Cys27–Cys36, Cys43–Cys70, Cys73–Cys89, and Cys90–Cys96.

The protein resides in the secreted. The polypeptide is Urinary protein 3 (Rattus norvegicus (Rat)).